Consider the following 2635-residue polypeptide: Large tegument protein deneddylase (2635 aa).

Positions 1–233 are deubiquitination activity; the sequence is MAAQPLYMEG…LHGPRMDISR (233 aa). The Peptidase C76 domain maps to 9-223; sequence EGMASTHQAN…NHYRTIVFEE (215 aa). Catalysis depends on residues Cys29, Asp159, and His161. Disordered stretches follow at residues 243–497, 2238–2269, 2357–2438, and 2500–2533; these read ITSP…DRYA, PLTI…QQPK, RTAL…KRAA, and KAGW…DDKS. A compositionally biased stretch (low complexity) spans 245–255; it reads SPSVSPAPSEA. 2 stretches are compositionally biased toward basic and acidic residues: residues 256 to 270 and 282 to 295; these read PLRR…ETRP and PTDR…DRPP. The tract at residues 316–325 is interaction with inner tegument protein; sequence KTGRGGNEGR. Over residues 330 to 346 the composition is skewed to basic and acidic residues; it reads PPDEHQPPHITAEHMDQ. A compositionally biased stretch (low complexity) spans 448–461; that stretch reads DDPLTPLYPLTDTP. The segment covering 2379 to 2402 has biased composition (low complexity); it reads TLTFRLPPTAPTPATAALETKTTP. Residues 2425–2437 are compositionally biased toward basic and acidic residues; that stretch reads HARDTSPPAEKRA.

It belongs to the herpesviridae large tegument protein family. In terms of assembly, interacts with host CUL1 and CUL4A; these interactions inhibit the E3 ligase activity of cullins. Interacts with inner tegument protein. Interacts with capsid vertex specific component CVC2. Interacts with the major capsid protein/MCP.

The protein resides in the virion tegument. It is found in the host cytoplasm. Its subcellular location is the host nucleus. The catalysed reaction is Thiol-dependent hydrolysis of ester, thioester, amide, peptide and isopeptide bonds formed by the C-terminal Gly of ubiquitin (a 76-residue protein attached to proteins as an intracellular targeting signal).. Functionally, large tegument protein that plays multiple roles in the viral cycle. During viral entry, remains associated with the capsid while most of the tegument is detached and participates in the capsid transport toward the host nucleus. Plays a role in the routing of the capsid at the nuclear pore complex and subsequent uncoating. Within the host nucleus, acts as a deneddylase and promotes the degradation of nuclear CRLs (cullin-RING ubiquitin ligases) and thereby stabilizes nuclear CRL substrates, while cytoplasmic CRLs remain unaffected. These modifications prevent host cell cycle S-phase progression and create a favorable environment allowing efficient viral genome replication. Participates later in the secondary envelopment of capsids. Indeed, plays a linker role for the association of the outer viral tegument to the capsids together with the inner tegument protein. The polypeptide is Large tegument protein deneddylase (Homo sapiens (Human)).